The sequence spans 90 residues: Probable Fe(2+)-trafficking protein (90 aa).

It belongs to the Fe(2+)-trafficking protein family.

Could be a mediator in iron transactions between iron acquisition and iron-requiring processes, such as synthesis and/or repair of Fe-S clusters in biosynthetic enzymes. The sequence is that of Probable Fe(2+)-trafficking protein from Pseudomonas syringae pv. tomato (strain ATCC BAA-871 / DC3000).